The sequence spans 179 residues: Diphosphoinositol polyphosphate phosphohydrolase 2 (179 aa).

Residues Arg-9, 17–19, and 38–40 each bind substrate; these read KKR and SSR. A Nudix hydrolase domain is found at 17 to 143; sequence KKRAACLCFR…VHAEYLERLK (127 aa). Mg(2+) contacts are provided by Gly-49 and Glu-65. The Nudix box motif lies at 50-71; it reads GGVEPEEEPGGAAAREVYEEAG. Glu-68 acts as the Proton acceptor in catalysis. Glu-69 is a binding site for Mg(2+). Residues 88 to 90, Arg-114, and Lys-132 each bind substrate; that span reads RKH.

It belongs to the Nudix hydrolase family. DIPP subfamily. The cofactor is Mg(2+). It depends on Mn(2+) as a cofactor.

Its subcellular location is the cytoplasm. The enzyme catalyses diphospho-myo-inositol polyphosphate + H2O = myo-inositol polyphosphate + phosphate.. It carries out the reaction 5-diphospho-1D-myo-inositol 1,2,3,4,6-pentakisphosphate + H2O = 1D-myo-inositol hexakisphosphate + phosphate + H(+). It catalyses the reaction 3,5-bis(diphospho)-1D-myo-inositol 1,2,4,6-tetrakisphosphate + H2O = 3-diphospho-1D-myo-inositol 1,2,4,5,6-pentakisphosphate + phosphate + 2 H(+). The catalysed reaction is 5-diphospho-1D-myo-inositol 1,3,4,6-tetrakisphosphate + H2O = 1D-myo-inositol 1,3,4,5,6-pentakisphosphate + phosphate + H(+). The enzyme catalyses P(1),P(6)-bis(5'-adenosyl) hexaphosphate + H2O = 2 ATP + 2 H(+). It carries out the reaction P(1),P(5)-bis(5'-adenosyl) pentaphosphate + H2O = ADP + ATP + 2 H(+). It catalyses the reaction 5-phospho-alpha-D-ribose 1-diphosphate + H2O = alpha-D-ribose 1,5-bisphosphate + phosphate + H(+). Functionally, cleaves the beta-phosphate from diphosphoinositol polyphosphates such as PP-InsP5 (diphosphoinositol pentakisphosphate), PP-InsP4 (diphosphoinositol tetrakisphosphate) and [PP]2-InsP4 (bisdiphosphoinositol tetrakisphosphate), suggesting that it may play a role in signal transduction. Diadenosine polyphosphates, particularly Ap6A (P(1),P(6)-bis(5a-adenosyl) hexaphosphate) and Ap5A (P(1),P(5)-bis(5'-adenosyl) pentaphosphate) are downstream effectors of a signaling cascade that regulates cardiac KATP channels, can also be substrates, although with lower preference than the diphosphoinositol polyphosphates. Can also catalyze the hydrolysis of 5-phosphoribose 1-diphosphate, generating the glycolytic activator ribose 1,5-bisphosphate. Does not play a role in U8 snoRNA decapping activity. Binds U8 snoRNA. The protein is Diphosphoinositol polyphosphate phosphohydrolase 2 of Rattus norvegicus (Rat).